We begin with the raw amino-acid sequence, 415 residues long: uncharacterized protein (415 aa).

The [4Fe-4S] cluster site is built by C66, C72, C75, and C149. 4 residues coordinate S-adenosyl-L-methionine: Q249, F276, E296, and D344. C370 acts as the Nucleophile in catalysis.

Belongs to the class I-like SAM-binding methyltransferase superfamily. RNA M5U methyltransferase family.

This is an uncharacterized protein from Brucella suis biovar 1 (strain 1330).